Consider the following 301-residue polypeptide: Cuticle collagen 2 (301 aa).

The signal sequence occupies residues 1 to 37; that stretch reads MDIDARIKAYKFVAYSAVTFSVVAVVSVFITLPMVYN. Triple-helical region stretches follow at residues 105–134, 153–176, 183–212, and 215–282; these read GPPG…PGKG, GPPG…PGSP, GPAG…PGAS, and GGPG…KGIC. The tract at residues 109–284 is disordered; sequence PGGSPGKPGK…GEGEKGICPK (176 aa). Composition is skewed to pro residues over residues 143-170 and 179-191; these read TQPP…PGPD and PSGP…PGPA. A compositionally biased stretch (gly residues) spans 201–218; it reads GAPGGPGEPGASEQGGPG. Pro residues predominate over residues 219–229; the sequence is EPGPAGPPGPA. Residues 252–261 show a composition bias toward low complexity; sequence PGAAGAPGAD. The span at 262–274 shows a compositional bias: gly residues; the sequence is GNPGGPGTAGKPG.

It belongs to the cuticular collagen family. In terms of assembly, collagen polypeptide chains are complexed within the cuticle by disulfide bonds and other types of covalent cross-links. As to expression, syncytial dorsal and ventral epidermis.

Its function is as follows. Nematode cuticles are composed largely of collagen-like proteins. The cuticle functions both as an exoskeleton and as a barrier to protect the worm from its environment. This is Cuticle collagen 2 (col-2) from Caenorhabditis elegans.